We begin with the raw amino-acid sequence, 241 residues long: 3-dehydroquinate dehydratase (241 aa).

Residues 35–37 (ELR) and Arg-70 each bind 3-dehydroquinate. Catalysis depends on His-132, which acts as the Proton donor/acceptor. The Schiff-base intermediate with substrate role is filled by Lys-159. 2 residues coordinate 3-dehydroquinate: Arg-201 and Gln-224.

It belongs to the type-I 3-dehydroquinase family. In terms of assembly, homodimer.

The catalysed reaction is 3-dehydroquinate = 3-dehydroshikimate + H2O. It participates in metabolic intermediate biosynthesis; chorismate biosynthesis; chorismate from D-erythrose 4-phosphate and phosphoenolpyruvate: step 3/7. Functionally, involved in the third step of the chorismate pathway, which leads to the biosynthesis of aromatic amino acids. Catalyzes the cis-dehydration of 3-dehydroquinate (DHQ) and introduces the first double bond of the aromatic ring to yield 3-dehydroshikimate. In Staphylococcus carnosus (strain TM300), this protein is 3-dehydroquinate dehydratase.